The chain runs to 87 residues: Probable Fe(2+)-trafficking protein (87 aa).

It belongs to the Fe(2+)-trafficking protein family.

Could be a mediator in iron transactions between iron acquisition and iron-requiring processes, such as synthesis and/or repair of Fe-S clusters in biosynthetic enzymes. The protein is Probable Fe(2+)-trafficking protein of Francisella tularensis subsp. mediasiatica (strain FSC147).